We begin with the raw amino-acid sequence, 546 residues long: Choline/ethanolamine transporter FLVCR2 (546 aa).

The interval 1–84 (MVNESLNQEE…TLAQPSGLTH (84 aa)) is disordered. At 1-93 (MVNESLNQEE…HPNELVKEDS (93 aa)) the chain is on the cytoplasmic side. A compositionally biased stretch (polar residues) spans 22-49 (QADTSYSTQPSVSIHPSVSGHPSVSIHP). 7 tandem repeats follow at residues 31 to 36 (PSVSIH), 37 to 42 (PSVSGH), 43 to 48 (PSVSIH), 49 to 54 (PSVSGH), 55 to 60 (PSVSID), 61 to 66 (PSVSVH), and 67 to 72 (PSSSAH). The 9 X 6 AA tandem repeats of P-S-[VS]-S-[VIAG]-[HD] stretch occupies residues 31–84 (PSVSIHPSVSGHPSVSIHPSVSGHPSVSIDPSVSVHPSSSAHPSTLAQPSGLTH). Positions 54–74 (HPSVSIDPSVSVHPSSSAHPS) are enriched in low complexity. The stretch at 73–78 (PSTLAQ) is one 8; approximate repeat. One copy of the 9; approximate repeat lies at 79 to 84 (PSGLTH). Residues 94-118 (VIKVSKRRWAVVLVFSCYSLCNAFQ) form a helical membrane-spanning segment. Choline-binding residues include N115, A116, and W119. Residues 119-136 (WIQYGSINNIFMNFYGVS) lie on the Extracellular side of the membrane. Residues 137-164 (AFAIDWLSMCYMLTYIPLLLPVAWMLEK) form a helical membrane-spanning segment. The Cytoplasmic segment spans residues 165 to 166 (FG). Residues 167-186 (LRTIAITGSALNCLGAWVKL) form a helical membrane-spanning segment. Residues 187–193 (GSLEPHL) lie on the Extracellular side of the membrane. The chain crosses the membrane as a helical span at residues 194 to 222 (FPVTMVGQVICSVAQVFILGMPSRIASVW). L212 lines the choline pocket. Topologically, residues 223 to 227 (FGANE) are cytoplasmic. A helical transmembrane segment spans residues 228-253 (VSTACSMAVFGNQLGIAIGFLVPPVL). The Extracellular segment spans residues 254–258 (VPNIK). The chain crosses the membrane as a helical span at residues 259–288 (DQEKLAYHISIMFYIIGGVATLLFILVIIV). The Cytoplasmic segment spans residues 289-324 (FKEKPKYPPSRAQSLSYALATTDASYLSSIVRLFKN). The chain crosses the membrane as a helical span at residues 325-355 (LNFVLLVITYGLNAGAFYALSTLLNRMVIMH). A choline-binding site is contributed by Y342. At 356 to 359 (FPGQ) the chain is on the extracellular side. The chain crosses the membrane as a helical span at residues 360 to 388 (EVNAGRIGLTIVIAGMFGAMISGIWLDKS). The Cytoplasmic segment spans residues 389-390 (KT). The helical transmembrane segment at 391 to 413 (YKETTLVVYIMTLVGMVVYTFTL) threads the bilayer. The Extracellular segment spans residues 414-416 (NLN). Residues 417 to 446 (HLWIVFITADSLGFFMTGYLPLGFEFAVEL) form a helical membrane-spanning segment. Residues 447–454 (TYPESEGV) are Cytoplasmic-facing. Residues 455–480 (SSGLLNVSAQVFGIIFTISQGQIIDN) form a helical membrane-spanning segment. Q464 contacts choline. Topologically, residues 481-482 (YG) are extracellular. Residues 483-505 (SVPGNIFLCVFLALGSALTAFIK) traverse the membrane as a helical segment. Residues 506–546 (SDLRRQRANKDAPETKVQEEEEEEEESNTSKVPTVLSEAHL) are Cytoplasmic-facing. Basic and acidic residues predominate over residues 511-523 (QRANKDAPETKVQ). A disordered region spans residues 511–546 (QRANKDAPETKVQEEEEEEEESNTSKVPTVLSEAHL). The residue at position 535 (S535) is a Phosphoserine.

It belongs to the major facilitator superfamily. Feline leukemia virus subgroup C receptor (TC 2.A.1.28.1) family. In terms of assembly, interacts with components of electron transfer chain complexes III, IV and V including CYC1, NDUFA4, COX4I1, ATP5PD and ATP5F1C; these interactions occur in the absence of heme and are disrupted upon heme binding. Interacts with ATP2A2; this interaction occurs in the absence of heme and promotes ATP2A2 proteasomal degradation; the complex is dissociated upon heme binding. Interacts with HMOX1; this interaction is potentiated in the presence of heme.

Its subcellular location is the cell membrane. The protein resides in the mitochondrion membrane. The protein localises to the endoplasmic reticulum membrane. It carries out the reaction choline(out) = choline(in). The catalysed reaction is ethanolamine(in) = ethanolamine(out). It catalyses the reaction heme b(in) = heme b(out). Its function is as follows. Choline uniporter that specifically mediates choline uptake at the blood-brain-barrier. Responsible for the majority of choline uptake across the blood-brain-barrier from the circulation into the brain. Choline, a nutrient critical for brain development, is a precursor of phosphatidylcholine, as well as betaine. Also mediates transport of ethanolamine. Choline and ethanolamine transport is not coupled with proton transport and is exclusively driven by the choline gradient across the plasma membrane. However, the presence of an inwardly directed proton gradient enhances choline uptake. Also acts as a heme b transporter. Required to regulate mitochondrial respiration processes, ATP synthesis and thermogenesis. At low heme levels, interacts with components of electron transfer chain (ETC) complexes and ATP2A2, leading to ubiquitin-mediated degradation of ATP2A2 and inhibition of thermogenesis. Upon heme binding, dissociates from ETC complexes to allow switching from mitochondrial ATP synthesis to thermogenesis. In Rattus norvegicus (Rat), this protein is Choline/ethanolamine transporter FLVCR2 (Flvcr2).